The primary structure comprises 219 residues: Small ribosomal subunit protein uS3 (219 aa).

The region spanning 38–106 is the KH type-2 domain; the sequence is VRKFVKTKLQ…QVAVNIVEVK (69 aa).

This sequence belongs to the universal ribosomal protein uS3 family. Part of the 30S ribosomal subunit. Forms a tight complex with proteins S10 and S14.

In terms of biological role, binds the lower part of the 30S subunit head. Binds mRNA in the 70S ribosome, positioning it for translation. The polypeptide is Small ribosomal subunit protein uS3 (Desulfitobacterium hafniense (strain DSM 10664 / DCB-2)).